The primary structure comprises 303 residues: MSDAGGGKKPPVDPQAGPGPGPGRAAGERGLSGSFPLVLKKLMENPPREARLDKEKGKEKLEEDEAAAASTMAVSASLMPPIWDKTIPYDGESFHLEYMDLDEFLLENGIPASPTHLAHNLLLPVAELEGKESASSSTASPPSSSTAIFQPSETVSSTESSLEKERETPSPIDPNCVEVDVNFNPDPADLVLSSVPGGELFNPRKHKFAEEDLKPQPMIKKAKKVFVPDEQKDEKYWTRRKKNNVAAKRSRDARRLKENQITIRAAFLEKENTALRTEVAELRKEVGKCKTIVSKYETKYGPL.

Disordered stretches follow at residues 1 to 63 and 132 to 176; these read MSDA…KLEE and ESAS…DPNC. S32 carries the phosphoserine modification. A compositionally biased stretch (basic and acidic residues) spans 41 to 61; the sequence is KLMENPPREARLDKEKGKEKL. The segment covering 133 to 160 has biased composition (low complexity); that stretch reads SASSSTASPPSSSTAIFQPSETVSSTES. The bZIP domain occupies 233–296; that stretch reads DEKYWTRRKK…GKCKTIVSKY (64 aa). A basic motif region spans residues 235-255; the sequence is KYWTRRKKNNVAAKRSRDARR. The segment at 256–263 is leucine-zipper; the sequence is LKENQITI.

It belongs to the bZIP family. PAR subfamily. As to quaternary structure, binds DNA as a homodimer or a heterodimer. Can form a heterodimer with DBP.

It localises to the nucleus. Functionally, transcription factor that binds to and transactivates the TSHB promoter. Binds to a minimal DNA-binding sequence 5'-[TC][AG][AG]TTA[TC][AG]-3'. This chain is Thyrotroph embryonic factor (TEF), found in Homo sapiens (Human).